We begin with the raw amino-acid sequence, 115 residues long: DNA-directed RNA polymerase subunit Rpo4 (115 aa).

This sequence belongs to the eukaryotic RPB4 RNA polymerase subunit family. In terms of assembly, part of the RNA polymerase complex. Forms a stalk with Rpo7 that extends from the main structure.

The protein resides in the cytoplasm. It carries out the reaction RNA(n) + a ribonucleoside 5'-triphosphate = RNA(n+1) + diphosphate. Its function is as follows. DNA-dependent RNA polymerase (RNAP) catalyzes the transcription of DNA into RNA using the four ribonucleoside triphosphates as substrates. This subunit is less well bound than the others. The polypeptide is DNA-directed RNA polymerase subunit Rpo4 (Methanocaldococcus jannaschii (strain ATCC 43067 / DSM 2661 / JAL-1 / JCM 10045 / NBRC 100440) (Methanococcus jannaschii)).